A 252-amino-acid chain; its full sequence is Imidazole glycerol phosphate synthase subunit HisF (252 aa).

Residues D11 and D130 contribute to the active site.

Belongs to the HisA/HisF family. As to quaternary structure, heterodimer of HisH and HisF.

It is found in the cytoplasm. It carries out the reaction 5-[(5-phospho-1-deoxy-D-ribulos-1-ylimino)methylamino]-1-(5-phospho-beta-D-ribosyl)imidazole-4-carboxamide + L-glutamine = D-erythro-1-(imidazol-4-yl)glycerol 3-phosphate + 5-amino-1-(5-phospho-beta-D-ribosyl)imidazole-4-carboxamide + L-glutamate + H(+). Its pathway is amino-acid biosynthesis; L-histidine biosynthesis; L-histidine from 5-phospho-alpha-D-ribose 1-diphosphate: step 5/9. IGPS catalyzes the conversion of PRFAR and glutamine to IGP, AICAR and glutamate. The HisF subunit catalyzes the cyclization activity that produces IGP and AICAR from PRFAR using the ammonia provided by the HisH subunit. The sequence is that of Imidazole glycerol phosphate synthase subunit HisF from Staphylococcus epidermidis (strain ATCC 12228 / FDA PCI 1200).